A 334-amino-acid chain; its full sequence is Large ribosomal subunit protein uL3 (334 aa).

Residues 1–10 show a composition bias toward basic residues; that stretch reads MGMKKSRPRR. The segment at 1-20 is disordered; sequence MGMKKSRPRRGSLAFSPRKR.

The protein belongs to the universal ribosomal protein uL3 family. In terms of assembly, part of the 50S ribosomal subunit. Forms a cluster with proteins L14 and L24e.

In terms of biological role, one of the primary rRNA binding proteins, it binds directly near the 3'-end of the 23S rRNA, where it nucleates assembly of the 50S subunit. This Methanococcus maripaludis (strain C6 / ATCC BAA-1332) protein is Large ribosomal subunit protein uL3.